The following is a 159-amino-acid chain: Voltage-dependent N-type calcium channel subunit alpha-1B (159 aa).

Residues 1-5 (LVTEI) form a helical membrane-spanning segment. The IV repeat unit spans residues 1–159 (LVTEIADTDN…LMLNLFVAVI (159 aa)). Topologically, residues 6-13 (ADTDNFIN) are extracellular. An N-linked (GlcNAc...) asparagine glycan is attached at asparagine 13. The helical transmembrane segment at 14–32 (LSFLRLFRAARLIKLLRQG) threads the bilayer. Topologically, residues 33–51 (YTIRILLWTFVQSFKALPY) are cytoplasmic. A helical membrane pass occupies residues 52–71 (VCLLIAMLFFIYAIIGMQVF). Residues 72 to 135 (GNIALNDETS…LTKNECGSDF (64 aa)) are Extracellular-facing. Residues 136 to 155 (AYFYFVSFIFLCSFLMLNLF) form a helical membrane-spanning segment. Over 156–159 (VAVI) the chain is Cytoplasmic.

It belongs to the calcium channel alpha-1 subunit (TC 1.A.1.11) family. CACNA1B subfamily. As to quaternary structure, multisubunit complex consisting of alpha-1, alpha-2, beta and delta subunits in a 1:1:1:1 ratio. The channel activity is directed by the pore-forming and voltage-sensitive alpha-1 subunit. In many cases, this subunit is sufficient to generate voltage-sensitive calcium channel activity. The auxiliary subunits beta and alpha-2/delta linked by a disulfide bridge regulate the channel activity. Interacts with RIMBP2. Post-translationally, phosphorylated in vitro by CaM-kinase II, PKA, PKC and CGPK.

It localises to the membrane. The enzyme catalyses Ca(2+)(in) = Ca(2+)(out). Voltage-sensitive calcium channels (VSCC) mediate the entry of calcium ions into excitable cells and are also involved in a variety of calcium-dependent processes, including muscle contraction, hormone or neurotransmitter release, gene expression, cell motility, cell division and cell death. This alpha-1B subunit gives rise to N-type calcium currents. N-type calcium channels belong to the 'high-voltage activated' (HVA) group. They are involved in pain signaling. Calcium channels containing alpha-1B subunit may play a role in directed migration of immature neurons. Mediates Ca(2+) release probability at hippocampal neuronal soma and synaptic terminals. This Gallus gallus (Chicken) protein is Voltage-dependent N-type calcium channel subunit alpha-1B (CACNA1B).